A 329-amino-acid chain; its full sequence is Ornithine carbamoyltransferase (329 aa).

Carbamoyl phosphate-binding positions include 51–54, Q78, R102, and 129–132; these read STRT and HPVQ. L-ornithine is bound by residues N174, D238, and 242 to 243; that span reads SM. Carbamoyl phosphate is bound by residues 278–279 and R306; that span reads CL.

The protein belongs to the aspartate/ornithine carbamoyltransferase superfamily. OTCase family.

The protein localises to the cytoplasm. It carries out the reaction carbamoyl phosphate + L-ornithine = L-citrulline + phosphate + H(+). It functions in the pathway amino-acid biosynthesis; L-arginine biosynthesis; L-arginine from L-ornithine and carbamoyl phosphate: step 1/3. In terms of biological role, reversibly catalyzes the transfer of the carbamoyl group from carbamoyl phosphate (CP) to the N(epsilon) atom of ornithine (ORN) to produce L-citrulline. The chain is Ornithine carbamoyltransferase from Helicobacter hepaticus (strain ATCC 51449 / 3B1).